Here is a 203-residue protein sequence, read N- to C-terminus: LexA repressor (203 aa).

Positions 29–49 (VREIGQEVGLSSSSTVHGYLK) form a DNA-binding region, H-T-H motif. Catalysis depends on for autocatalytic cleavage activity residues Ser126 and Lys163.

The protein belongs to the peptidase S24 family. In terms of assembly, homodimer.

It catalyses the reaction Hydrolysis of Ala-|-Gly bond in repressor LexA.. Functionally, represses a number of genes involved in the response to DNA damage (SOS response), including recA and lexA. In the presence of single-stranded DNA, RecA interacts with LexA causing an autocatalytic cleavage which disrupts the DNA-binding part of LexA, leading to derepression of the SOS regulon and eventually DNA repair. The chain is LexA repressor from Pelotomaculum thermopropionicum (strain DSM 13744 / JCM 10971 / SI).